The primary structure comprises 141 residues: Extracellular globin-1 (141 aa).

In terms of domain architecture, Globin spans 1-141 (DCNTLKRFKV…YAVIAAGIKP (141 aa)). An intrachain disulfide couples C2 to C131. H94 is a binding site for heme b.

The protein belongs to the globin family. In terms of assembly, the giant hemoglobins of worms are formed of a monomeric subunit and a disulfide-bonded trimer. This subunit is monomeric.

Its subcellular location is the secreted. In Metaphire sieboldi (Earthworm), this protein is Extracellular globin-1.